Consider the following 158-residue polypeptide: Urease accessory protein UreE (158 aa).

The protein belongs to the UreE family.

The protein localises to the cytoplasm. In terms of biological role, involved in urease metallocenter assembly. Binds nickel. Probably functions as a nickel donor during metallocenter assembly. This chain is Urease accessory protein UreE, found in Klebsiella pneumoniae subsp. pneumoniae (strain ATCC 700721 / MGH 78578).